The sequence spans 424 residues: Serine--tRNA ligase (424 aa).

233 to 235 is a binding site for L-serine; sequence TAE. Residue 264-266 coordinates ATP; the sequence is RRE. Glutamate 287 contacts L-serine. Position 351–354 (351–354) interacts with ATP; sequence EISS. Serine 386 provides a ligand contact to L-serine.

This sequence belongs to the class-II aminoacyl-tRNA synthetase family. Type-1 seryl-tRNA synthetase subfamily. As to quaternary structure, homodimer. The tRNA molecule binds across the dimer.

The protein localises to the cytoplasm. It carries out the reaction tRNA(Ser) + L-serine + ATP = L-seryl-tRNA(Ser) + AMP + diphosphate + H(+). The catalysed reaction is tRNA(Sec) + L-serine + ATP = L-seryl-tRNA(Sec) + AMP + diphosphate + H(+). The protein operates within aminoacyl-tRNA biosynthesis; selenocysteinyl-tRNA(Sec) biosynthesis; L-seryl-tRNA(Sec) from L-serine and tRNA(Sec): step 1/1. Functionally, catalyzes the attachment of serine to tRNA(Ser). Is also able to aminoacylate tRNA(Sec) with serine, to form the misacylated tRNA L-seryl-tRNA(Sec), which will be further converted into selenocysteinyl-tRNA(Sec). The chain is Serine--tRNA ligase from Pseudothermotoga lettingae (strain ATCC BAA-301 / DSM 14385 / NBRC 107922 / TMO) (Thermotoga lettingae).